The primary structure comprises 92 residues: Signal peptidase complex subunit 1 (92 aa).

Residues 1 to 12 are Cytoplasmic-facing; sequence MDWQGQKLVEQL. The chain crosses the membrane as a helical span at residues 13–30; sequence MQILLVISGVVAVVVGYT. Over 31–36 the chain is Lumenal; it reads TESFRT. The chain crosses the membrane as a helical span at residues 37 to 59; that stretch reads MMLIYAGGVVLTTLVTVPNWPFY. Residues 60–92 are Cytoplasmic-facing; it reads NLHPLKWLDPSEAEKHPKPEVVSVASKKKFSKK. The segment at 73 to 92 is disordered; the sequence is EKHPKPEVVSVASKKKFSKK.

Belongs to the SPCS1 family. Component of the signal peptidase complex (SPC) composed of a catalytic subunit SEC11 and three accessory subunits SPCS1, SPCS2 and SPCS3. The complex induces a local thinning of the ER membrane which is used to measure the length of the signal peptide (SP) h-region of protein substrates. This ensures the selectivity of the complex towards h-regions shorter than 18-20 amino acids.

The protein localises to the endoplasmic reticulum membrane. In terms of biological role, component of the signal peptidase complex (SPC) which catalyzes the cleavage of N-terminal signal sequences from nascent proteins as they are translocated into the lumen of the endoplasmic reticulum. Dispensable for SPC enzymatic activity. The polypeptide is Signal peptidase complex subunit 1 (Arabidopsis thaliana (Mouse-ear cress)).